The chain runs to 448 residues: Tubulin beta chain (448 aa).

8 residues coordinate GTP: glutamine 11, glutamate 69, serine 138, glycine 142, threonine 143, glycine 144, asparagine 204, and asparagine 226. Glutamate 69 is a binding site for Mg(2+). Residues 425-448 (YQDASISEGEEEYLEEEEPLEHEE) are disordered. Residues 432 to 448 (EGEEEYLEEEEPLEHEE) show a composition bias toward acidic residues.

The protein belongs to the tubulin family. Dimer of alpha and beta chains. A typical microtubule is a hollow water-filled tube with an outer diameter of 25 nm and an inner diameter of 15 nM. Alpha-beta heterodimers associate head-to-tail to form protofilaments running lengthwise along the microtubule wall with the beta-tubulin subunit facing the microtubule plus end conferring a structural polarity. Microtubules usually have 13 protofilaments but different protofilament numbers can be found in some organisms and specialized cells. The cofactor is Mg(2+).

Its subcellular location is the cytoplasm. It is found in the cytoskeleton. Functionally, tubulin is the major constituent of microtubules, a cylinder consisting of laterally associated linear protofilaments composed of alpha- and beta-tubulin heterodimers. Microtubules grow by the addition of GTP-tubulin dimers to the microtubule end, where a stabilizing cap forms. Below the cap, tubulin dimers are in GDP-bound state, owing to GTPase activity of alpha-tubulin. The polypeptide is Tubulin beta chain (benR) (Aspergillus parasiticus).